Reading from the N-terminus, the 470-residue chain is GTPase Der (470 aa).

EngA-type G domains are found at residues 2–165 (KTIA…GLEA) and 201–372 (IRVG…ENFS). Residues 8-15 (GKPNVGKS), 55-59 (DTGGI), 117-120 (NKID), 207-214 (GKVNVGKS), 254-258 (DTAGI), and 318-321 (NKWD) each bind GTP. In terms of domain architecture, KH-like spans 373–457 (RRIPTSILNK…PILIRARKRG (85 aa)).

It belongs to the TRAFAC class TrmE-Era-EngA-EngB-Septin-like GTPase superfamily. EngA (Der) GTPase family. Associates with the 50S ribosomal subunit.

Functionally, GTPase that plays an essential role in the late steps of ribosome biogenesis. The chain is GTPase Der from Wolinella succinogenes (strain ATCC 29543 / DSM 1740 / CCUG 13145 / JCM 31913 / LMG 7466 / NCTC 11488 / FDC 602W) (Vibrio succinogenes).